The sequence spans 111 residues: Disintegrin DS-AS (111 aa).

The signal sequence occupies residues 1–20 (MIQVLLVIICLAVFPYQGSC). Residues 21–47 (IILESGNVNDYEIVYPKKLIVLPTGAM) constitute a propeptide that is removed on maturation. The Disintegrin domain maps to 47-111 (MNSPHPCCDP…PDCPRNPYKD (65 aa)). 4 cysteine pairs are disulfide-bonded: Cys-53/Cys-76, Cys-67/Cys-73, Cys-72/Cys-97, and Cys-85/Cys-104. Residues 89-91 (RGD) carry the Cell attachment site motif.

As to quaternary structure, heterodimer; disulfide-linked.

The protein resides in the secreted. Its function is as follows. Inhibits ADP-induced platelet aggregation in human platelet-rich plasma (IC(50) is 8 uM). The chain is Disintegrin DS-AS from Atheris squamigera (Variable bush viper).